A 622-amino-acid chain; its full sequence is Chaperone protein HscA homolog (622 aa).

This sequence belongs to the heat shock protein 70 family.

Its function is as follows. Chaperone involved in the maturation of iron-sulfur cluster-containing proteins. Has a low intrinsic ATPase activity which is markedly stimulated by HscB. This is Chaperone protein HscA homolog from Delftia acidovorans (strain DSM 14801 / SPH-1).